The sequence spans 296 residues: CRISPR-associated endonuclease Cas1 2 (296 aa).

Mn(2+) is bound by residues glutamate 157, histidine 224, and aspartate 237.

This sequence belongs to the CRISPR-associated endonuclease Cas1 family. Homodimer, forms a heterotetramer with a Cas2 homodimer. Mg(2+) is required as a cofactor. Requires Mn(2+) as cofactor.

In terms of biological role, CRISPR (clustered regularly interspaced short palindromic repeat), is an adaptive immune system that provides protection against mobile genetic elements (viruses, transposable elements and conjugative plasmids). CRISPR clusters contain spacers, sequences complementary to antecedent mobile elements, and target invading nucleic acids. CRISPR clusters are transcribed and processed into CRISPR RNA (crRNA). Acts as a dsDNA endonuclease. Involved in the integration of spacer DNA into the CRISPR cassette. This is CRISPR-associated endonuclease Cas1 2 from Chlorobaculum tepidum (strain ATCC 49652 / DSM 12025 / NBRC 103806 / TLS) (Chlorobium tepidum).